Consider the following 180-residue polypeptide: Acireductone dioxygenase (180 aa).

Fe(2+) is bound by residues histidine 97, histidine 99, glutamate 103, and histidine 141. Ni(2+) is bound by residues histidine 97, histidine 99, glutamate 103, and histidine 141.

The protein belongs to the acireductone dioxygenase (ARD) family. Monomer. It depends on Fe(2+) as a cofactor. Ni(2+) serves as cofactor.

It catalyses the reaction 1,2-dihydroxy-5-(methylsulfanyl)pent-1-en-3-one + O2 = 3-(methylsulfanyl)propanoate + CO + formate + 2 H(+). The enzyme catalyses 1,2-dihydroxy-5-(methylsulfanyl)pent-1-en-3-one + O2 = 4-methylsulfanyl-2-oxobutanoate + formate + 2 H(+). It participates in amino-acid biosynthesis; L-methionine biosynthesis via salvage pathway; L-methionine from S-methyl-5-thio-alpha-D-ribose 1-phosphate: step 5/6. Functionally, catalyzes 2 different reactions between oxygen and the acireductone 1,2-dihydroxy-3-keto-5-methylthiopentene (DHK-MTPene) depending upon the metal bound in the active site. Fe-containing acireductone dioxygenase (Fe-ARD) produces formate and 2-keto-4-methylthiobutyrate (KMTB), the alpha-ketoacid precursor of methionine in the methionine recycle pathway. Ni-containing acireductone dioxygenase (Ni-ARD) produces methylthiopropionate, carbon monoxide and formate, and does not lie on the methionine recycle pathway. In Cronobacter sakazakii (Enterobacter sakazakii), this protein is Acireductone dioxygenase.